The following is a 476-amino-acid chain: Ribulose bisphosphate carboxylase large chain (476 aa).

The substrate site is built by Asn124 and Thr174. Lys176 (proton acceptor) is an active-site residue. Lys178 provides a ligand contact to substrate. Mg(2+) contacts are provided by Lys202, Asp204, and Glu205. Position 202 is an N6-carboxylysine (Lys202). His295 acts as the Proton acceptor in catalysis. Substrate is bound by residues Arg296, His328, and Ser380.

This sequence belongs to the RuBisCO large chain family. Type I subfamily. As to quaternary structure, heterohexadecamer of 8 large chains and 8 small chains; disulfide-linked. The disulfide link is formed within the large subunit homodimers. Forms complexes of many stoichiometries with Raf1 with and without RbcS. RuBisCO interacts with the C-terminus of CcmM. Mg(2+) is required as a cofactor. The disulfide bond which can form in the large chain dimeric partners within the hexadecamer appears to be associated with oxidative stress and protein turnover.

It is found in the carboxysome. The catalysed reaction is 2 (2R)-3-phosphoglycerate + 2 H(+) = D-ribulose 1,5-bisphosphate + CO2 + H2O. It catalyses the reaction D-ribulose 1,5-bisphosphate + O2 = 2-phosphoglycolate + (2R)-3-phosphoglycerate + 2 H(+). In terms of biological role, ruBisCO catalyzes two reactions: the carboxylation of D-ribulose 1,5-bisphosphate, the primary event in carbon dioxide fixation, as well as the oxidative fragmentation of the pentose substrate in the photorespiration process. Both reactions occur simultaneously and in competition at the same active site. This is Ribulose bisphosphate carboxylase large chain from Nostoc sp. (strain PCC 7120 / SAG 25.82 / UTEX 2576).